The chain runs to 160 residues: Protein cornichon homolog 2 (160 aa).

Residues 1–10 (MAFTFAAFCY) lie on the Cytoplasmic side of the membrane. Residues 11-31 (MLTLVLCASLIFFVIWHIIAF) traverse the membrane as a helical segment. Residues 32–72 (DELRTDFKNPIDQGNPARARERLKNIERICCLLRKLVVPEY) lie on the Lumenal side of the membrane. A helical transmembrane segment spans residues 73 to 93 (SIHGLFCLMFLCAAEWVTLGL). Residues 94–138 (NIPLLFYHLWRYFHRPADGSEVMYDAVSIMNADILNYCQKESWCK) lie on the Cytoplasmic side of the membrane. A helical transmembrane segment spans residues 139–159 (LAFYLLSFFYYLYSMVYTLVS). Position 160 (phenylalanine 160) is a topological domain, lumenal.

The protein belongs to the cornichon family. Acts as an auxiliary subunit for AMPA-selective glutamate receptors (AMPARs). Found in a complex with GRIA1, GRIA2, GRIA3, GRIA4, CNIH3, CACNG2, CACNG3, CACNG4, CACNG5, CACNG7 and CACNG8. Interacts with CACGN8. Interacts with GRIA1. Found in a complex with GRIA1, GRIA2, GRIA3, GRIA4, DLG4 and CACNG8. In terms of tissue distribution, expression is up-regulated in dorsolateral prefrontal cortex of patients with schizophrenia (postmortem brain study).

It is found in the endoplasmic reticulum membrane. The protein resides in the postsynaptic cell membrane. The protein localises to the cell projection. Its subcellular location is the dendrite. It localises to the dendritic spine. It is found in the postsynaptic density. In terms of biological role, regulates the trafficking and gating properties of AMPA-selective glutamate receptors (AMPARs). Promotes their targeting to the cell membrane and synapses and modulates their gating properties by regulating their rates of activation, deactivation and desensitization. Blocks CACNG8-mediated resensitization of AMPA receptors. This chain is Protein cornichon homolog 2, found in Homo sapiens (Human).